The sequence spans 203 residues: MKLHLASGNLHKAEEFAVLAAASARDDAPAIEIVSARAMGGMPEVVEDTGTFVGNARKKAAALRVRLPAGSWVLADDSGVCVDALHGGPGVESAYYAGPEASGRANYEKLLRVLADVPDERRGAYFFCLLLVLDGAGAEYVFEGRCQGRLLREPRGSAGFGYDPIFVPDGFDRSYAELGEDVKNRISHRARAWAQLAEWGRRS.

Position 7 to 12 (7 to 12) interacts with substrate; the sequence is SGNLHK. Mg(2+) is bound by residues Glu47 and Asp77. Asp77 serves as the catalytic Proton acceptor. Substrate is bound by residues Ser78, 160–163, Lys183, and 188–189; these read FGYD and HR.

This sequence belongs to the HAM1 NTPase family. As to quaternary structure, homodimer. Mg(2+) serves as cofactor.

The catalysed reaction is XTP + H2O = XMP + diphosphate + H(+). It catalyses the reaction dITP + H2O = dIMP + diphosphate + H(+). The enzyme catalyses ITP + H2O = IMP + diphosphate + H(+). Pyrophosphatase that catalyzes the hydrolysis of nucleoside triphosphates to their monophosphate derivatives, with a high preference for the non-canonical purine nucleotides XTP (xanthosine triphosphate), dITP (deoxyinosine triphosphate) and ITP. Seems to function as a house-cleaning enzyme that removes non-canonical purine nucleotides from the nucleotide pool, thus preventing their incorporation into DNA/RNA and avoiding chromosomal lesions. The polypeptide is dITP/XTP pyrophosphatase (Opitutus terrae (strain DSM 11246 / JCM 15787 / PB90-1)).